Here is a 315-residue protein sequence, read N- to C-terminus: DNA-directed RNA polymerase subunit alpha (315 aa).

Residues 1–228 form an alpha N-terminal domain (alpha-NTD) region; it reads MLEIEKPIIE…EHFKLFMSLT (228 aa). Residues 245–315 form an alpha C-terminal domain (alpha-CTD) region; it reads KEKVLEMTVE…LGLALKLTEE (71 aa).

The protein belongs to the RNA polymerase alpha chain family. As to quaternary structure, homodimer. The RNAP catalytic core consists of 2 alpha, 1 beta, 1 beta' and 1 omega subunit. When a sigma factor is associated with the core the holoenzyme is formed, which can initiate transcription.

The catalysed reaction is RNA(n) + a ribonucleoside 5'-triphosphate = RNA(n+1) + diphosphate. Its function is as follows. DNA-dependent RNA polymerase catalyzes the transcription of DNA into RNA using the four ribonucleoside triphosphates as substrates. This chain is DNA-directed RNA polymerase subunit alpha, found in Clostridium beijerinckii (strain ATCC 51743 / NCIMB 8052) (Clostridium acetobutylicum).